Here is a 529-residue protein sequence, read N- to C-terminus: Calcium-dependent protein kinase 3 (529 aa).

The segment at 1–73 (MGHRHSKSKS…GRILGRPMEE (73 aa)) is disordered. Residue G2 is the site of N-myristoyl glycine attachment. A compositionally biased stretch (gly residues) spans 39–53 (SGSGTVGSSGSGTGG). A Protein kinase domain is found at 78–336 (YEFGRELGRG…AAEVLNHPWI (259 aa)). ATP is bound by residues 84 to 92 (LGRGQFGVT) and K107. Residue D202 is the Proton acceptor of the active site. Residue S242 is modified to Phosphoserine. The tract at residues 342-372 (ASDKPLDNAVLSRMKQFRAMNKLKKMALKVI) is autoinhibitory domain. 4 EF-hand domains span residues 379–414 (EEII…LGSK), 415–450 (ISEA…MNRI), 451–485 (ERED…KYNM), and 486–521 (GDDK…GNPE). Ca(2+) is bound by residues D392, D394, N396, E403, D428, D430, D432, S434, E439, D464, D466, S468, Y470, E475, D499, D501, D503, K505, and E510.

Belongs to the protein kinase superfamily. Ser/Thr protein kinase family. CDPK subfamily. In terms of assembly, interacts with GHR1. As to expression, expressed in both guard cells and mesophyll cells.

Its subcellular location is the cytoplasm. It is found in the nucleus. It catalyses the reaction L-seryl-[protein] + ATP = O-phospho-L-seryl-[protein] + ADP + H(+). It carries out the reaction L-threonyl-[protein] + ATP = O-phospho-L-threonyl-[protein] + ADP + H(+). Its activity is regulated as follows. Activated by calcium. Autophosphorylation may play an important role in the regulation of the kinase activity. May play a role in signal transduction pathways that involve calcium as a second messenger. Functions in abscisic acid (ABA) regulation of guard cell S-type anion- and Ca(2+)-permeable channels and stomatal closure. The sequence is that of Calcium-dependent protein kinase 3 from Arabidopsis thaliana (Mouse-ear cress).